The sequence spans 1111 residues: Receptor-type guanylate cyclase gcy-7 (1111 aa).

A signal peptide spans 1-24 (MKPFYSMSLVLFLVITLLPKPMFP). At 25 to 488 (QVATGTTGNV…CPKSFVDEYL (464 aa)) the chain is on the extracellular side. 8 N-linked (GlcNAc...) asparagine glycosylation sites follow: Asn-80, Asn-300, Asn-326, Asn-353, Asn-389, Asn-407, Asn-430, and Asn-441. A helical transmembrane segment spans residues 489–509 (IWVIVAIVVLFLAITAAACGI). Over 510-1111 (YFSIQARRQE…TLKSDEQLSD (602 aa)) the chain is Cytoplasmic. The 303-residue stretch at 536–838 (QINSKQKGKG…NDNLMDHVFN (303 aa)) folds into the Protein kinase domain. ATP contacts are provided by residues 542–550 (KGKGEHSVR) and Lys-568. Residues 896–1026 (TIFFSDVVQF…DAVNTASRME (131 aa)) form the Guanylate cyclase domain.

Belongs to the adenylyl cyclase class-4/guanylyl cyclase family. In terms of tissue distribution, expressed asymmetrically in ASE left (ASEL) sensory neuron. Expressed in excretory canal cell.

Its subcellular location is the cell membrane. It catalyses the reaction GTP = 3',5'-cyclic GMP + diphosphate. Guanylate cyclase involved in the production of the second messenger cGMP. Unlike other guanylate cyclases expressed in ASE neurons, may not play a role in chemotaxis responses toward salt ions in ASEL (ASE left) sensory neurons. The sequence is that of Receptor-type guanylate cyclase gcy-7 from Caenorhabditis elegans.